We begin with the raw amino-acid sequence, 481 residues long: Aromatic amino acid aminotransferase C1773.13 (481 aa).

Belongs to the class-I pyridoxal-phosphate-dependent aminotransferase family. The cofactor is pyridoxal 5'-phosphate.

It localises to the cytoplasm. It carries out the reaction an aromatic L-alpha-amino acid + 2-oxoglutarate = an aromatic oxo-acid + L-glutamate. Its function is as follows. Has aromatic amino acid transaminase activity. The chain is Aromatic amino acid aminotransferase C1773.13 from Schizosaccharomyces pombe (strain 972 / ATCC 24843) (Fission yeast).